The following is a 304-amino-acid chain: PTB domain-containing engulfment adapter protein 1 (304 aa).

T16 bears the Phosphothreonine mark. The 156-residue stretch at 21-176 (SKHYIPYNAK…AGMQKRIQDL (156 aa)) folds into the PID domain. The stretch at 159-200 (DVETRKQIAGMQKRIQDLETENMELKNKVQDLESRLRTTQVS) forms a coiled coil. S223 is modified (phosphoserine).

This sequence belongs to the ced-6 family. As to quaternary structure, homodimer. Interacts with clathrin and MEGF10. Interacts with GDP-bound ARF6, but not with GTP-bound ARF6. Part of a complex composed of GULP1, ACAP1 and ARF6. Interacts with ACAP1, LRP1 and STAB2. Detected throughout the brain, particularly in Purkinje cells, hippocampal and cortical neurons (at protein level).

The protein localises to the cytoplasm. In terms of biological role, modulates cellular glycosphingolipid and cholesterol transport. May play a role in the internalization of various LRP1 ligands, such as PSAP. May function as an adapter protein. Required for efficient phagocytosis of apoptotic cells. Increases cellular levels of GTP-bound ARF6. This chain is PTB domain-containing engulfment adapter protein 1 (Gulp1), found in Mus musculus (Mouse).